Reading from the N-terminus, the 291-residue chain is tRNA dimethylallyltransferase (291 aa).

9 to 16 (GTTASGKT) is an ATP binding site. 11-16 (TASGKT) is a binding site for substrate. An interaction with substrate tRNA region spans residues 34 to 37 (DSLC).

The protein belongs to the IPP transferase family. In terms of assembly, monomer. Requires Mg(2+) as cofactor.

The catalysed reaction is adenosine(37) in tRNA + dimethylallyl diphosphate = N(6)-dimethylallyladenosine(37) in tRNA + diphosphate. Functionally, catalyzes the transfer of a dimethylallyl group onto the adenine at position 37 in tRNAs that read codons beginning with uridine, leading to the formation of N6-(dimethylallyl)adenosine (i(6)A). This is tRNA dimethylallyltransferase from Campylobacter lari (strain RM2100 / D67 / ATCC BAA-1060).